A 397-amino-acid polypeptide reads, in one-letter code: Keratinocyte differentiation factor 1 (397 aa).

Pro residues predominate over residues 1-16 (MPRPGQPRPSSGPPRL). Disordered regions lie at residues 1-67 (MPRP…SAEP), 130-158 (EHNGVPPSPDRAPPSRRDGQRLKTSMGSS), and 192-214 (LAEPPPTRHSLPSTFTNSPRGSE). Positions 44 to 55 (RPDPKDPGHHGP) are enriched in basic and acidic residues. The span at 201-211 (SLPSTFTNSPR) shows a compositional bias: polar residues. Ser-218 bears the Phosphoserine mark. 2 disordered regions span residues 304–339 (ISTRKSRSRPQTSEGRSARSTAPAAAPDSGHETMLG) and 361–392 (ARKLRPYGAPGYPASQDSSFQGTDTDSSGAPL). Over residues 321–330 (ARSTAPAAAP) the composition is skewed to low complexity. The span at 375–388 (SQDSSFQGTDTDSS) shows a compositional bias: polar residues.

Its subcellular location is the cytoplasm. The protein resides in the cell junction. Functionally, plays a role in the regulation of the epidermis formation during early development. Required both as an inhibitor of basal cell proliferation and a promoter of differentiation of basal progenitor cell progeny. The protein is Keratinocyte differentiation factor 1 (Kdf1) of Mus musculus (Mouse).